Here is a 480-residue protein sequence, read N- to C-terminus: Glycogen synthase (480 aa).

Residue Lys15 coordinates ADP-alpha-D-glucose.

Belongs to the glycosyltransferase 1 family. Bacterial/plant glycogen synthase subfamily.

The enzyme catalyses [(1-&gt;4)-alpha-D-glucosyl](n) + ADP-alpha-D-glucose = [(1-&gt;4)-alpha-D-glucosyl](n+1) + ADP + H(+). It functions in the pathway glycan biosynthesis; glycogen biosynthesis. In terms of biological role, synthesizes alpha-1,4-glucan chains using ADP-glucose. The protein is Glycogen synthase of Rhizobium rhizogenes (strain K84 / ATCC BAA-868) (Agrobacterium radiobacter).